We begin with the raw amino-acid sequence, 339 residues long: MTQAQTAAVQPDAIPVAAPTPQRWRVADVVALFELPFNDLMFRAQQVHREHFDANAVQLSTLLSIKTGGCEEDCGYCSQSSHHDTGLKAEKLMDVDAVLEAARAAKASGASRFCMGAAWRNPKERHMPALTEMVRGVKELGLETCMTLGMLEDEQAQQLAHAGLDYYNHNLDTSPEFYGQVISTRTYQDRLDTLDRVRDAGINVCCGGIIGMGESRRERAGLISQLANLNPYPDSVPINNLVAIEGTPLEGTAPLDPFEFVRTIAVARITMPKAVVRLSAGREQLDDGLQALCFLAGANSMFYGDQLLTTSNPQSQKDRALFERLGMRASDADAMSADA.

Residues 55 to 282 (NAVQLSTLLS…KAVVRLSAGR (228 aa)) enclose the Radical SAM core domain. [4Fe-4S] cluster contacts are provided by Cys70, Cys74, and Cys77. Positions 114, 145, 205, and 277 each coordinate [2Fe-2S] cluster.

The protein belongs to the radical SAM superfamily. Biotin synthase family. Homodimer. Requires [4Fe-4S] cluster as cofactor. The cofactor is [2Fe-2S] cluster.

The enzyme catalyses (4R,5S)-dethiobiotin + (sulfur carrier)-SH + 2 reduced [2Fe-2S]-[ferredoxin] + 2 S-adenosyl-L-methionine = (sulfur carrier)-H + biotin + 2 5'-deoxyadenosine + 2 L-methionine + 2 oxidized [2Fe-2S]-[ferredoxin]. It functions in the pathway cofactor biosynthesis; biotin biosynthesis; biotin from 7,8-diaminononanoate: step 2/2. Its function is as follows. Catalyzes the conversion of dethiobiotin (DTB) to biotin by the insertion of a sulfur atom into dethiobiotin via a radical-based mechanism. The sequence is that of Biotin synthase from Burkholderia vietnamiensis (strain G4 / LMG 22486) (Burkholderia cepacia (strain R1808)).